Consider the following 278-residue polypeptide: Large ribosomal subunit protein uL2 (278 aa).

2 stretches are compositionally biased toward basic residues: residues 210-219 (RSRWLGKRPQ) and 252-263 (KKSRGIKTRNSK). Residues 210-278 (RSRWLGKRPQ…LIIRHRKGNK (69 aa)) form a disordered region.

It belongs to the universal ribosomal protein uL2 family. In terms of assembly, part of the 50S ribosomal subunit. Forms a bridge to the 30S subunit in the 70S ribosome.

In terms of biological role, one of the primary rRNA binding proteins. Required for association of the 30S and 50S subunits to form the 70S ribosome, for tRNA binding and peptide bond formation. It has been suggested to have peptidyltransferase activity; this is somewhat controversial. Makes several contacts with the 16S rRNA in the 70S ribosome. This is Large ribosomal subunit protein uL2 from Lactobacillus johnsonii (strain CNCM I-12250 / La1 / NCC 533).